A 343-amino-acid polypeptide reads, in one-letter code: Cytoplasmic tRNA 2-thiolation protein 1 (343 aa).

Belongs to the TtcA family. CTU1/NCS6/ATPBD3 subfamily.

The protein localises to the cytoplasm. The protein operates within tRNA modification; 5-methoxycarbonylmethyl-2-thiouridine-tRNA biosynthesis. Functionally, plays a central role in 2-thiolation of mcm(5)S(2)U at tRNA wobble positions of tRNA(Lys), tRNA(Glu) and tRNA(Gln). Directly binds tRNAs and probably acts by catalyzing adenylation of tRNAs, an intermediate required for 2-thiolation. It is unclear whether it acts as a sulfurtransferase that transfers sulfur from thiocarboxylated URM1 onto the uridine of tRNAs at wobble position. This is Cytoplasmic tRNA 2-thiolation protein 1 from Drosophila mojavensis (Fruit fly).